The primary structure comprises 431 residues: Adenylosuccinate synthetase (431 aa).

GTP is bound by residues 12 to 18 and 40 to 42; these read GDEGKGK and GHT. Asp-13 (proton acceptor) is an active-site residue. Positions 13 and 40 each coordinate Mg(2+). IMP-binding positions include 13–16, 38–41, Thr-131, Arg-145, Gln-225, Thr-240, and Arg-304; these read DEGK and NAGH. Residue His-41 is the Proton donor of the active site. 300–306 is a substrate binding site; the sequence is TTTGRKR. GTP is bound by residues Arg-306, 332-334, and 414-416; these read KLD and STS.

It belongs to the adenylosuccinate synthetase family. Homodimer. Mg(2+) is required as a cofactor.

Its subcellular location is the cytoplasm. It carries out the reaction IMP + L-aspartate + GTP = N(6)-(1,2-dicarboxyethyl)-AMP + GDP + phosphate + 2 H(+). Its pathway is purine metabolism; AMP biosynthesis via de novo pathway; AMP from IMP: step 1/2. Its function is as follows. Plays an important role in the de novo pathway of purine nucleotide biosynthesis. Catalyzes the first committed step in the biosynthesis of AMP from IMP. The sequence is that of Adenylosuccinate synthetase from Jannaschia sp. (strain CCS1).